Reading from the N-terminus, the 86-residue chain is Small ribosomal subunit protein bS18 (86 aa).

The protein belongs to the bacterial ribosomal protein bS18 family. In terms of assembly, part of the 30S ribosomal subunit. Forms a tight heterodimer with protein bS6.

In terms of biological role, binds as a heterodimer with protein bS6 to the central domain of the 16S rRNA, where it helps stabilize the platform of the 30S subunit. The sequence is that of Small ribosomal subunit protein bS18 from Heliobacterium modesticaldum (strain ATCC 51547 / Ice1).